We begin with the raw amino-acid sequence, 312 residues long: Olfactory receptor 10D3 (312 aa).

Residues 1–26 (MEVKNCCMVTEFILLGIPHTEGLEMT) are Extracellular-facing. The helical transmembrane segment at 27–47 (LFVLFLPFYACTLLGNVSILV) threads the bilayer. Residues 48-57 (AVMSSARLHT) lie on the Cytoplasmic side of the membrane. A helical transmembrane segment spans residues 58–78 (PMYFFLGNLSVFDMGFSSVTC). Residues 79–97 (PKMLLYLMGLSRLISYKDC) are Extracellular-facing. Cys97 and Cys179 are disulfide-bonded. The chain crosses the membrane as a helical span at residues 98 to 118 (VCQLFFFHFLGSIECFLFTVM). At 119-139 (AYDRFTAICYPLRYTVIMNPR) the chain is on the cytoplasmic side. A helical transmembrane segment spans residues 140–160 (ICVALAVGTWLLGCIHSSILT). The Extracellular segment spans residues 161–197 (SLTFTLPYCGPNEVDHFFCDIPALLPLACADTSLAQR). A helical transmembrane segment spans residues 198–218 (VSFTNVGLISLVCFLLILLSY). Topologically, residues 219–239 (TRITISILSIRTTEGRRRAFS) are cytoplasmic. The helical transmembrane segment at 240–260 (TCSAHLIAILCAYGPIITVYL) threads the bilayer. Topologically, residues 261 to 266 (QPTPNP) are extracellular. A helical transmembrane segment spans residues 267–287 (MLGTVVQILMNLVGPMLNPLI). Residues 288 to 312 (YTLRNKEVKTALKTILHRTGHVPES) are Cytoplasmic-facing.

It belongs to the G-protein coupled receptor 1 family.

The protein localises to the cell membrane. In terms of biological role, odorant receptor. In Homo sapiens (Human), this protein is Olfactory receptor 10D3.